The chain runs to 76 residues: MFTLKKSLLLLFFLGTISLSLCQEERNADEEDGGEVTEEEVKRSFLDTLKNLAISAAKGAGQSVLSTLSCKLSKTC.

Positions 1 to 22 (MFTLKKSLLLLFFLGTISLSLC) are cleaved as a signal peptide. Residues 23 to 41 (QEERNADEEDGGEVTEEEV) constitute a propeptide that is removed on maturation. Cysteines 70 and 76 form a disulfide.

In terms of tissue distribution, expressed by the skin glands.

The protein resides in the secreted. Its function is as follows. Antimicrobial peptide. This is Lividin-2 from Odorrana livida (Green mountain frog).